Here is a 333-residue protein sequence, read N- to C-terminus: Fructose-1,6-bisphosphatase class 1 (333 aa).

Glutamate 89, aspartate 112, leucine 114, and aspartate 115 together coordinate Mg(2+). Substrate is bound by residues 115-118 (DGSS), asparagine 208, tyrosine 241, and lysine 271. Residue glutamate 277 coordinates Mg(2+).

The protein belongs to the FBPase class 1 family. In terms of assembly, homotetramer. Mg(2+) is required as a cofactor.

The protein localises to the cytoplasm. The enzyme catalyses beta-D-fructose 1,6-bisphosphate + H2O = beta-D-fructose 6-phosphate + phosphate. Its pathway is carbohydrate biosynthesis; gluconeogenesis. This is Fructose-1,6-bisphosphatase class 1 from Haemophilus influenzae (strain ATCC 51907 / DSM 11121 / KW20 / Rd).